We begin with the raw amino-acid sequence, 159 residues long: Regulatory protein RecX (159 aa).

It belongs to the RecX family.

The protein resides in the cytoplasm. Functionally, modulates RecA activity. The chain is Regulatory protein RecX from Ralstonia pickettii (strain 12J).